We begin with the raw amino-acid sequence, 240 residues long: Axial regulator YABBY 3 (240 aa).

The C4-type zinc finger occupies 30 to 57; the sequence is CSFCDTVLAVSVPPSSLFKTVTVRCGHC. A disordered region spans residues 135 to 156; the sequence is DHLQEMPRPPPANRPPEKRQRV.

Belongs to the YABBY family. As to quaternary structure, interacts with SPL/NZZ. Interacts with SPEAR2. Binds to LUG and LUH; these complexes promote adaxial cell identity in leaves as well as embryonic shoot apical meristem (SAM) initiation and postembryonic SAM maintenance. As to expression, expressed in abaxial regions of lateral aerial organ primordia leading to cotyledons, leaves, flower meristems, sepals, petals, stamen and carpels, but not in roots.

The protein resides in the nucleus. In terms of biological role, involved in the abaxial cell fate determination during embryogenesis and organogenesis. Regulates the initiation of embryonic shoot apical meristem (SAM) development. Contributes to the repression of KNOX genes (STM, KNAT1/BP and KNAT2) to avoid ectopic meristems. Binds DNA without sequence specificity. The chain is Axial regulator YABBY 3 (YAB3) from Arabidopsis thaliana (Mouse-ear cress).